A 1192-amino-acid chain; its full sequence is Probable ATP-dependent RNA helicase kurz (1192 aa).

The tract at residues 170–214 (ELQAKRKNPNVISVEEDDEDSSSSDEDDEEAPAQSAPIAIPTPVS) is disordered. Residues 183–200 (VEEDDEDSSSSDEDDEEA) show a composition bias toward acidic residues. Residues 270-436 (METINENPIV…TRLFKIPPPL (167 aa)) enclose the Helicase ATP-binding domain. 283 to 290 (GETGSGKT) contacts ATP. The DEAH box signature appears at 379–382 (DEAH). Residues 504–529 (APTKDVAKNGKVSEEEKEETIDDAAS) form a disordered region. Positions 505–517 (PTKDVAKNGKVSE) are enriched in basic and acidic residues. Residue serine 529 is modified to Phosphoserine. Threonine 530 is subject to Phosphothreonine. The 207-residue stretch at 540 to 746 (DMKRVIRNIR…DLMLQMRCMG (207 aa)) folds into the Helicase C-terminal domain. Basic and acidic residues predominate over residues 567–583 (DDYKLPGDDTEADMHEQ). The disordered stretch occupies residues 567-612 (DDYKLPGDDTEADMHEQPDEDDEQEGLEEDNDDELGLEDESGMGSG). Acidic residues predominate over residues 584-607 (PDEDDEQEGLEEDNDDELGLEDES).

The protein belongs to the DEAD box helicase family. DEAH subfamily.

The enzyme catalyses ATP + H2O = ADP + phosphate + H(+). This chain is Probable ATP-dependent RNA helicase kurz (kz), found in Drosophila melanogaster (Fruit fly).